The chain runs to 314 residues: DNA-directed RNA polymerase subunit alpha (314 aa).

Positions methionine 1 to threonine 228 are alpha N-terminal domain (alpha-NTD). Residues asparagine 241–serine 314 are alpha C-terminal domain (alpha-CTD).

It belongs to the RNA polymerase alpha chain family. In cyanobacteria the RNAP catalytic core is composed of 2 alpha, 1 beta, 1 beta', 1 gamma and 1 omega subunit. When a sigma factor is associated with the core the holoenzyme is formed, which can initiate transcription.

It carries out the reaction RNA(n) + a ribonucleoside 5'-triphosphate = RNA(n+1) + diphosphate. Its function is as follows. DNA-dependent RNA polymerase catalyzes the transcription of DNA into RNA using the four ribonucleoside triphosphates as substrates. This is DNA-directed RNA polymerase subunit alpha from Gloeobacter violaceus (strain ATCC 29082 / PCC 7421).